The following is a 533-amino-acid chain: Putative sel1-like repeat-containing protein L21 (533 aa).

5 Sel1-like repeats span residues 105 to 140 (VLSQ…NQGL), 141 to 172 (SFAQ…QSGY), 173 to 206 (YLSN…NQGC), 207 to 242 (NISQ…KQGN), and 243 to 278 (YFSQ…NCGH).

The chain is Putative sel1-like repeat-containing protein L21 from Acanthamoeba polyphaga mimivirus (APMV).